The primary structure comprises 145 residues: D-aminoacyl-tRNA deacylase (145 aa).

Residues 137 to 138 (GP) carry the Gly-cisPro motif, important for rejection of L-amino acids motif.

It belongs to the DTD family. As to quaternary structure, homodimer.

The protein resides in the cytoplasm. It carries out the reaction glycyl-tRNA(Ala) + H2O = tRNA(Ala) + glycine + H(+). The catalysed reaction is a D-aminoacyl-tRNA + H2O = a tRNA + a D-alpha-amino acid + H(+). Functionally, an aminoacyl-tRNA editing enzyme that deacylates mischarged D-aminoacyl-tRNAs. Also deacylates mischarged glycyl-tRNA(Ala), protecting cells against glycine mischarging by AlaRS. Acts via tRNA-based rather than protein-based catalysis; rejects L-amino acids rather than detecting D-amino acids in the active site. By recycling D-aminoacyl-tRNA to D-amino acids and free tRNA molecules, this enzyme counteracts the toxicity associated with the formation of D-aminoacyl-tRNA entities in vivo and helps enforce protein L-homochirality. The chain is D-aminoacyl-tRNA deacylase from Klebsiella pneumoniae subsp. pneumoniae (strain ATCC 700721 / MGH 78578).